Consider the following 172-residue polypeptide: Large ribosomal subunit protein uL5 (172 aa).

Belongs to the universal ribosomal protein uL5 family. Part of the 50S ribosomal subunit; contacts the 5S rRNA and probably tRNA. Forms a bridge to the 30S subunit in the 70S ribosome.

Functionally, this is one of the proteins that bind and probably mediate the attachment of the 5S RNA into the large ribosomal subunit, where it forms part of the central protuberance. In the 70S ribosome it contacts protein S13 of the 30S subunit (bridge B1b), connecting the 2 subunits; this bridge is implicated in subunit movement. May contact the P site tRNA; the 5S rRNA and some of its associated proteins might help stabilize positioning of ribosome-bound tRNAs. This Haloferax mediterranei (strain ATCC 33500 / DSM 1411 / JCM 8866 / NBRC 14739 / NCIMB 2177 / R-4) (Halobacterium mediterranei) protein is Large ribosomal subunit protein uL5.